The sequence spans 386 residues: All-trans-retinol dehydrogenase [NAD(+)] ADH7 (386 aa).

C59 contacts Zn(2+). Residue 60-64 (RTDDH) coordinates NAD(+). Zn(2+)-binding residues include H80, C110, C113, C116, C124, and C186. NAD(+) is bound by residues 211-216 (GLGGVG), D235, K240, 281-283 (IGH), 304-306 (VGV), 329-331 (CVF), and R381.

This sequence belongs to the zinc-containing alcohol dehydrogenase family. Class-IV subfamily. In terms of assembly, homodimer. It depends on Zn(2+) as a cofactor. As to expression, preferentially expressed in stomach.

The protein localises to the cytoplasm. It carries out the reaction a primary alcohol + NAD(+) = an aldehyde + NADH + H(+). The catalysed reaction is 10-hydroxydecanoate + NAD(+) = 10-oxodecanoate + NADH + H(+). The enzyme catalyses all-trans-retinol + NAD(+) = all-trans-retinal + NADH + H(+). It catalyses the reaction 9-cis-retinol + NAD(+) = 9-cis-retinal + NADH + H(+). It carries out the reaction all-trans-3,4-didehydroretinol + NAD(+) = all-trans-3,4-didehydroretinal + NADH + H(+). The catalysed reaction is all-trans-4-hydroxyretinol + NAD(+) = all-trans-4-hydroxyretinal + NADH + H(+). The enzyme catalyses all-trans-4-oxoretinol + NAD(+) = all-trans-4-oxoretinal + NADH + H(+). It catalyses the reaction 12-hydroxydodecanoate + NAD(+) = 12-oxododecanoate + NADH + H(+). It carries out the reaction 16-hydroxyhexadecanoate + NAD(+) = 16-oxohexadecanoate + NADH + H(+). The catalysed reaction is hexan-1-ol + NAD(+) = hexanal + NADH + H(+). The enzyme catalyses (E)-hex-2-en-1-ol + NAD(+) = (E)-hex-2-enal + NADH + H(+). It catalyses the reaction (E)-4-hydroxynon-2-en-1-ol + NAD(+) = (E)-4-hydroxynon-2-enal + NADH + H(+). With respect to regulation, retinol oxidation is inhibited by the detergent Tween 80. Ethanol inhibits both all-trans-retinol and 9-cis-retinol oxidation. 13-cis-retinol is an effective competitive inhibitor of the 9-cis-retinol oxidation. All-trans-retinoic acid is a powerful inhibitor of all-trans-retinol oxidation. 13-cis-retinoic acid is a powerful inhibitor of all-trans-retinol oxidation. Cimetidine competitively inhibited ethanol oxidation. In terms of biological role, catalyzes the NAD-dependent oxidation of all-trans-retinol, alcohol, and omega-hydroxy fatty acids and their derivatives. Oxidizes preferentially all trans-retinol, all-trans-4-hydroxyretinol, 9-cis-retinol, 2-hexenol, and long chain omega-hydroxy fatty acids such as juniperic acid. In vitro can also catalyze the NADH-dependent reduction of all-trans-retinal and aldehydes and their derivatives. Reduces preferentially all trans-retinal, all-trans-4-oxoretinal and hexanal. Catalyzes in the oxidative direction with higher efficiency. Therefore may participate in retinoid metabolism, fatty acid omega-oxidation, and elimination of cytotoxic aldehydes produced by lipid peroxidation. This Homo sapiens (Human) protein is All-trans-retinol dehydrogenase [NAD(+)] ADH7.